The primary structure comprises 65 residues: Large ribosomal subunit protein bL35 (65 aa).

A disordered region spans residues 1–29 (MPKMKTNRGAAKRFKKTGSGRIKRGKAFT). Basic residues predominate over residues 10-26 (AAKRFKKTGSGRIKRGK).

Belongs to the bacterial ribosomal protein bL35 family.

The sequence is that of Large ribosomal subunit protein bL35 from Desulfotalea psychrophila (strain LSv54 / DSM 12343).